The sequence spans 150 residues: Peptide methionine sulfoxide reductase MsrB (150 aa).

Positions 9 to 132 (EAELKRTLTK…NSAALKFIPF (124 aa)) constitute a MsrB domain. Residue cysteine 121 is the Nucleophile of the active site.

It belongs to the MsrB Met sulfoxide reductase family.

The catalysed reaction is L-methionyl-[protein] + [thioredoxin]-disulfide + H2O = L-methionyl-(R)-S-oxide-[protein] + [thioredoxin]-dithiol. The chain is Peptide methionine sulfoxide reductase MsrB from Mycoplasma genitalium (strain ATCC 33530 / DSM 19775 / NCTC 10195 / G37) (Mycoplasmoides genitalium).